We begin with the raw amino-acid sequence, 300 residues long: MTEFHSGFVCLVGRPNTGKSTLTNALVGAKVAITSTRPQTTRHAIRGIVHSDDFQIILVDTPGLHRPRTLLGKRLNDLVRETYAAVDVIGLCIPADEAIGPGDRWIVEQLRSTGPANTTLVVIVTKIDKVPKEKVVAQLVAVSELVTNAAEIVPVSAMTGDRVDLLIDVLAAALPAGPAYYPDGELTDEPEEVLMAELIREAALQGVRDELPHSLAVVIDEVSPREGRDDLIDVHAALYVERDSQKGIVIGKGGARLREVGTAARSQIENLLGTKVYLDLRVKVAKNWQRDPKQLGRLGF.

Residues 5–176 (HSGFVCLVGR…IDVLAAALPA (172 aa)) form the Era-type G domain. Positions 13–20 (GRPNTGKS) are G1. Position 13–20 (13–20 (GRPNTGKS)) interacts with GTP. Residues 39 to 43 (QTTRH) are G2. Residues 60 to 63 (DTPG) are G3. GTP-binding positions include 60-64 (DTPGL) and 125-128 (TKID). The segment at 125 to 128 (TKID) is G4. The tract at residues 155–157 (VSA) is G5. The region spanning 207-286 (VRDELPHSLA…YLDLRVKVAK (80 aa)) is the KH type-2 domain.

This sequence belongs to the TRAFAC class TrmE-Era-EngA-EngB-Septin-like GTPase superfamily. Era GTPase family. In terms of assembly, monomer.

The protein localises to the cell envelope. Its subcellular location is the secreted. It is found in the cell wall. Functionally, exhibits GTPase activity. Binds RNA but is probably not involved in ribosome assembly in mycobacteria. The chain is GTPase Era from Mycobacterium bovis (strain ATCC BAA-935 / AF2122/97).